The primary structure comprises 339 residues: Inositol 2-dehydrogenase (339 aa).

This sequence belongs to the Gfo/Idh/MocA family. Homotetramer.

The enzyme catalyses myo-inositol + NAD(+) = scyllo-inosose + NADH + H(+). Its function is as follows. Involved in the oxidation of myo-inositol (MI) to 2-keto-myo-inositol (2KMI or 2-inosose). This Leifsonia xyli subsp. xyli (strain CTCB07) protein is Inositol 2-dehydrogenase.